The primary structure comprises 429 residues: MKFLLVLALCAVVYAKHEAYIGWKSYYVGVATDAQAKALEPLIQKYELDFLSHPTKSREGVVLVKPQHQAGFVQDIEAGGITYRIHADDVKRQLEFDDQLIEMQRMSSFTRTAGRQLPYDNYQELEVIDEYLDYIGEKYPDVATVVNAAESFEGRPIKYIKISTTNFEDENKPVIFIDGGIHAREWISPPSVTWAIHKLVEDVTENDLLEKFDWILLPVVNPDGYKYTFTNERFWRKTRSTNNNPLSQICRGADGNRNFDFVWNSIGTSNSPCSDIYAGTSAFSEVETRVVRDILHEHLARMALYLTMHSFGSMILYPWGHDGSLSQNALGLHTVGVAMASVIQSNALPNFPPYTVGNSALVIGYYIAGSSEDYAHSIGVPLSYTYELPGLSSGWDGFHLPPQYIEQVCRETWEGIVVGARRAGDLFRK.

A signal peptide spans 1-15 (MKFLLVLALCAVVYA). Positions 121–423 (NYQELEVIDE…EGIVVGARRA (303 aa)) constitute a Peptidase M14 domain. Residues H182 and E185 each coordinate Zn(2+). Substrate-binding positions include 182–185 (HARE), R236, and 256–257 (NR). C250 and C273 are joined by a disulfide. Position 309 (H309) interacts with Zn(2+). Substrate is bound by residues 310-311 (SF) and Y365. The active-site Proton donor/acceptor is E387.

Belongs to the peptidase M14 family. The cofactor is Zn(2+).

It localises to the secreted. The enzyme catalyses Preferential release of a C-terminal lysine or arginine amino acid.. Highly resistant to inhibition by potato carboxypeptidase inhibitor (PCI). Moderately inhibited by leech carboxypeptidase inhibitor (LCI) and tick carboxypeptidase inhibitor (TCI). Its function is as follows. Metalloprotease which cleaves a single amino acid from the C-terminal end of polypeptide chains. Shows a strong preference for peptides with a terminal lysine residue. The sequence is that of Carboxypeptidase B from Helicoverpa zea (Corn earworm moth).